A 589-amino-acid chain; its full sequence is Alpha-1,2-mannosyltransferase MNN22 (589 aa).

Over 1-16 the chain is Cytoplasmic; the sequence is MGSIFKDGRRILVRPK. Residues 17 to 33 traverse the membrane as a helical segment; the sequence is SLIICLCLISIIFTQLI. The Extracellular portion of the chain corresponds to 34–589; that stretch reads RYQYQLIADE…NTIAWLGKKT (556 aa). The segment at 50–77 is disordered; that stretch reads EDHSSSQSLKNTKLNSTRSSSPISPPKS. Polar residues predominate over residues 54–71; sequence SSQSLKNTKLNSTRSSSP. Residues Asn-64, Asn-332, and Asn-530 are each glycosylated (N-linked (GlcNAc...) asparagine).

The protein belongs to the MNN1/MNT family.

Its subcellular location is the golgi apparatus membrane. Its pathway is protein modification; protein glycosylation. Functionally, alpha-1,2-mannosyltransferase required for cell wall integrity. Responsible for addition of the first alpha-1,2-linked mannose to form the branches on the mannan backbone of oligosaccharides. Addition of alpha-1,2-mannose is required for stabilization of the alpha-1,6-mannose backbone and hence regulates mannan fibril length; and is important for both immune recognition and virulence. This Candida albicans (strain SC5314 / ATCC MYA-2876) (Yeast) protein is Alpha-1,2-mannosyltransferase MNN22 (MNN22).